The following is a 161-amino-acid chain: 6,7-dimethyl-8-ribityllumazine synthase (161 aa).

Residues tryptophan 26, 58-60 (SFE), and 81-83 (VVI) each bind 5-amino-6-(D-ribitylamino)uracil. A (2S)-2-hydroxy-3-oxobutyl phosphate-binding site is contributed by 86–87 (GT). The active-site Proton donor is histidine 89. Residue phenylalanine 114 participates in 5-amino-6-(D-ribitylamino)uracil binding. Position 128 (arginine 128) interacts with (2S)-2-hydroxy-3-oxobutyl phosphate.

Belongs to the DMRL synthase family.

The catalysed reaction is (2S)-2-hydroxy-3-oxobutyl phosphate + 5-amino-6-(D-ribitylamino)uracil = 6,7-dimethyl-8-(1-D-ribityl)lumazine + phosphate + 2 H2O + H(+). Its pathway is cofactor biosynthesis; riboflavin biosynthesis; riboflavin from 2-hydroxy-3-oxobutyl phosphate and 5-amino-6-(D-ribitylamino)uracil: step 1/2. In terms of biological role, catalyzes the formation of 6,7-dimethyl-8-ribityllumazine by condensation of 5-amino-6-(D-ribitylamino)uracil with 3,4-dihydroxy-2-butanone 4-phosphate. This is the penultimate step in the biosynthesis of riboflavin. The chain is 6,7-dimethyl-8-ribityllumazine synthase from Streptomyces coelicolor (strain ATCC BAA-471 / A3(2) / M145).